The primary structure comprises 118 residues: Large ribosomal subunit protein bL20 (118 aa).

This sequence belongs to the bacterial ribosomal protein bL20 family.

Functionally, binds directly to 23S ribosomal RNA and is necessary for the in vitro assembly process of the 50S ribosomal subunit. It is not involved in the protein synthesizing functions of that subunit. The chain is Large ribosomal subunit protein bL20 from Salmonella arizonae (strain ATCC BAA-731 / CDC346-86 / RSK2980).